The sequence spans 126 residues: Acyl carrier protein 2, mitochondrial (126 aa).

The N-terminal 36 residues, 1–36 (MAARGAMLRYLRVNVNPTIQNPRECVLPFSILLRRF), are a transit peptide targeting the mitochondrion. A Carrier domain is found at 48–123 (SEVTDRVLSV…LAVDFIASHP (76 aa)). Ser83 bears the O-(pantetheine 4'-phosphoryl)serine mark.

Belongs to the acyl carrier protein (ACP) family. As to quaternary structure, complex I is composed of at least 49 different subunits. In terms of processing, 4'-phosphopantetheine is transferred from CoA to a specific serine of the apo-ACP-like protein.

The protein resides in the mitochondrion. The protein operates within lipid metabolism; fatty acid biosynthesis. In terms of biological role, carrier of the growing fatty acid chain in fatty acid biosynthesis. May be involved in the synthesis of short and medium chain fatty acids. Accessory and non-catalytic subunit of the mitochondrial membrane respiratory chain NADH dehydrogenase (Complex I), which functions in the transfer of electrons from NADH to the respiratory chain. The chain is Acyl carrier protein 2, mitochondrial (MTACP2) from Arabidopsis thaliana (Mouse-ear cress).